The primary structure comprises 287 residues: 4-hydroxybenzoate octaprenyltransferase (287 aa).

6 consecutive transmembrane segments (helical) span residues 41 to 61 (WPLLVIFSLGTLLMRSAGCAM), 89 to 109 (WEAIAIAVGLAFVSFLLILPL), 133 to 153 (FFAIPQAYLGIAFGFGIPMAF), 158 to 178 (DTVPTIAWVMLIANIFWSVAY), 202 to 224 (FGRFDVAAVMLCYAVTLGIYVWI), and 267 to 287 (NNWLGGVLFAGIAAHYLLAGS).

It belongs to the UbiA prenyltransferase family. Requires Mg(2+) as cofactor.

The protein localises to the cell inner membrane. The enzyme catalyses all-trans-octaprenyl diphosphate + 4-hydroxybenzoate = 4-hydroxy-3-(all-trans-octaprenyl)benzoate + diphosphate. The protein operates within cofactor biosynthesis; ubiquinone biosynthesis. Functionally, catalyzes the prenylation of para-hydroxybenzoate (PHB) with an all-trans polyprenyl group. Mediates the second step in the final reaction sequence of ubiquinone-8 (UQ-8) biosynthesis, which is the condensation of the polyisoprenoid side chain with PHB, generating the first membrane-bound Q intermediate 3-octaprenyl-4-hydroxybenzoate. The chain is 4-hydroxybenzoate octaprenyltransferase from Burkholderia lata (strain ATCC 17760 / DSM 23089 / LMG 22485 / NCIMB 9086 / R18194 / 383).